The following is a 151-amino-acid chain: MKKIDVKILDPRVGKEFPLPTYATSGSAGLDLRACLNDAVELAPGDTTLVPTGLAIHIADPSLAAMMLPRSGLGHKHGIVLGNLVGLIDSDYQGQLMISVWNRGQDSFTIQPGERIAQMIFVPVVQAEFNLVEDFDATDRGEGGFGHSGRQ.

Residues 70 to 72 (RSG), N83, 87 to 89 (LID), and M97 each bind substrate.

This sequence belongs to the dUTPase family. Homotrimer. It depends on Mg(2+) as a cofactor.

It catalyses the reaction dUTP + H2O = dUMP + diphosphate + H(+). Its pathway is pyrimidine metabolism; dUMP biosynthesis; dUMP from dCTP (dUTP route): step 2/2. In terms of biological role, this enzyme is involved in nucleotide metabolism: it produces dUMP, the immediate precursor of thymidine nucleotides and it decreases the intracellular concentration of dUTP so that uracil cannot be incorporated into DNA. This Escherichia coli (strain K12 / MC4100 / BW2952) protein is Deoxyuridine 5'-triphosphate nucleotidohydrolase.